A 122-amino-acid polypeptide reads, in one-letter code: Small ribosomal subunit protein uS13 (122 aa).

A disordered region spans residues 94–122 (KGLPVRGQRTHTNARTRKGPRRAIAGKKK).

This sequence belongs to the universal ribosomal protein uS13 family. In terms of assembly, part of the 30S ribosomal subunit. Forms a loose heterodimer with protein S19. Forms two bridges to the 50S subunit in the 70S ribosome.

Its function is as follows. Located at the top of the head of the 30S subunit, it contacts several helices of the 16S rRNA. In the 70S ribosome it contacts the 23S rRNA (bridge B1a) and protein L5 of the 50S subunit (bridge B1b), connecting the 2 subunits; these bridges are implicated in subunit movement. Contacts the tRNAs in the A and P-sites. The protein is Small ribosomal subunit protein uS13 of Syntrophus aciditrophicus (strain SB).